We begin with the raw amino-acid sequence, 129 residues long: Transcription antitermination protein NusB (129 aa).

It belongs to the NusB family.

Involved in transcription antitermination. Required for transcription of ribosomal RNA (rRNA) genes. Binds specifically to the boxA antiterminator sequence of the ribosomal RNA (rrn) operons. This Staphylococcus aureus (strain MRSA252) protein is Transcription antitermination protein NusB.